We begin with the raw amino-acid sequence, 242 residues long: Glucosamine-6-phosphate deaminase 1 (242 aa).

Residues T36, G38, T39, and D67 each contribute to the beta-D-fructose 6-phosphate site. D67 functions as the Proton acceptor; for enolization step in the catalytic mechanism. Catalysis depends on N136, which acts as the For ring-opening step. H138 and G140 together coordinate beta-D-fructose 6-phosphate. The active-site Proton acceptor; for ring-opening step is the H138. E143 acts as the For ring-opening step in catalysis. The beta-D-fructose 6-phosphate site is built by R167 and K202.

The protein belongs to the glucosamine/galactosamine-6-phosphate isomerase family. NagB subfamily. Monomer.

The catalysed reaction is alpha-D-glucosamine 6-phosphate + H2O = beta-D-fructose 6-phosphate + NH4(+). The protein operates within amino-sugar metabolism; N-acetylneuraminate degradation; D-fructose 6-phosphate from N-acetylneuraminate: step 5/5. Activity decreases at high substrate concentrations, which may reflect substrate inhibition. Unlike the E.coli enzyme, is not regulated by an allosteric mechanism. Its function is as follows. Catalyzes the reversible isomerization-deamination of glucosamine 6-phosphate (GlcN6P) to form fructose 6-phosphate (Fru6P) and ammonium ion. The sequence is that of Glucosamine-6-phosphate deaminase 1 (nagB) from Bacillus subtilis (strain 168).